Consider the following 952-residue polypeptide: Protein translocase subunit SecA (952 aa).

ATP is bound by residues Gln104, 122 to 126, and Asp512; that span reads GEGKT.

This sequence belongs to the SecA family. Monomer and homodimer. Part of the essential Sec protein translocation apparatus which comprises SecA, SecYEG and auxiliary proteins SecDF. Other proteins may also be involved.

It is found in the cell inner membrane. The protein localises to the cytoplasm. The enzyme catalyses ATP + H2O + cellular proteinSide 1 = ADP + phosphate + cellular proteinSide 2.. Its function is as follows. Part of the Sec protein translocase complex. Interacts with the SecYEG preprotein conducting channel. Has a central role in coupling the hydrolysis of ATP to the transfer of proteins into and across the cell membrane, serving as an ATP-driven molecular motor driving the stepwise translocation of polypeptide chains across the membrane. In Gloeobacter violaceus (strain ATCC 29082 / PCC 7421), this protein is Protein translocase subunit SecA.